Here is a 793-residue protein sequence, read N- to C-terminus: E3 UFM1-protein ligase 1 (793 aa).

Positions 2–212 are required for E3 UFM1-protein ligase activity; that stretch reads AADWEEIRRL…INNLLNLYGF (211 aa). 2 disordered regions span residues 405–472 and 745–793; these read ALLE…RNKL and GAEK…SVTE. Residues 427–439 are compositionally biased toward gly residues; sequence EGGGSVKSGGGGN. The span at 767–781 shows a compositional bias: basic and acidic residues; the sequence is SLQRELHSLSRDIKD.

This sequence belongs to the UFL1 family. Catalytic component of the UFM1 ribosome E3 ligase (UREL) complex. Interacts with E2-like enzyme UFC1.

The protein localises to the endoplasmic reticulum membrane. The protein resides in the cytoplasm. Its subcellular location is the cytosol. It is found in the nucleus. It localises to the chromosome. Functionally, E3 protein ligase that mediates ufmylation, the covalent attachment of the ubiquitin-like modifier UFM1 to lysine residues on target proteins, and which plays a key role in various processes, such as ribosome recycling, response to DNA damage, interferon response or reticulophagy (also called ER-phagy). As part of the UREL complex, plays a key role in ribosome recycling by catalyzing mono-ufmylation of RPL26/uL24 subunit of the 60S ribosome. Ufmylation of RPL26/uL24 occurs on free 60S ribosomes following ribosome dissociation: it weakens the junction between post-termination 60S subunits and SEC61 translocons, promoting release and recycling of the large ribosomal subunit from the endoplasmic reticulum membrane. Ufmylation of RPL26/uL24 and subsequent 60S ribosome recycling either take place after normal termination of translation or after ribosome stalling during cotranslational translocation at the endoplasmic reticulum. Involved in reticulophagy in response to endoplasmic reticulum stress by mediating ufmylation of proteins such as CYB5R3 and RPN1, thereby promoting lysosomal degradation of ufmylated proteins. Ufmylation in response to endoplasmic reticulum stress is essential for processes such as hematopoiesis, blood vessel morphogenesis or inflammatory response. The polypeptide is E3 UFM1-protein ligase 1 (Danio rerio (Zebrafish)).